Consider the following 122-residue polypeptide: Acidic phospholipase A2 (122 aa).

7 disulfides stabilise this stretch: Cys26–Cys115, Cys28–Cys44, Cys43–Cys95, Cys49–Cys122, Cys50–Cys88, Cys57–Cys81, and Cys75–Cys86. Ca(2+) is bound by residues Tyr27, Gly29, and Gly31. His47 is an active-site residue. Asp48 serves as a coordination point for Ca(2+). Residue Asp89 is part of the active site.

Belongs to the phospholipase A2 family. Group II subfamily. D49 sub-subfamily. In terms of assembly, monomer. The cofactor is Ca(2+). As to expression, expressed by the venom gland.

The protein resides in the secreted. It catalyses the reaction a 1,2-diacyl-sn-glycero-3-phosphocholine + H2O = a 1-acyl-sn-glycero-3-phosphocholine + a fatty acid + H(+). In terms of biological role, PLA2 catalyzes the calcium-dependent hydrolysis of the 2-acyl groups in 3-sn-phosphoglycerides. This Gloydius blomhoffii (Mamushi) protein is Acidic phospholipase A2.